The following is a 476-amino-acid chain: tRNA(Ile)-lysidine synthase (476 aa).

26–31 (SGGSDS) lines the ATP pocket.

The protein belongs to the tRNA(Ile)-lysidine synthase family.

It is found in the cytoplasm. It catalyses the reaction cytidine(34) in tRNA(Ile2) + L-lysine + ATP = lysidine(34) in tRNA(Ile2) + AMP + diphosphate + H(+). Ligates lysine onto the cytidine present at position 34 of the AUA codon-specific tRNA(Ile) that contains the anticodon CAU, in an ATP-dependent manner. Cytidine is converted to lysidine, thus changing the amino acid specificity of the tRNA from methionine to isoleucine. The protein is tRNA(Ile)-lysidine synthase of Bartonella quintana (strain Toulouse) (Rochalimaea quintana).